A 980-amino-acid polypeptide reads, in one-letter code: NACHT, LRR and PYD domains-containing protein 7 (980 aa).

Residues methionine 1 to glutamate 93 enclose the Pyrin domain. Residues glutamate 104–tryptophan 123 are disordered. Residues glutamate 113–tryptophan 123 are compositionally biased toward basic and acidic residues. The 320-residue stretch at tyrosine 172–aspartate 491 folds into the NACHT domain. Glycine 178–threonine 185 lines the ATP pocket. 9 LRR repeats span residues cysteine 614–leucine 638, asparagine 674–aspartate 697, lysine 760–valine 784, asparagine 788–tyrosine 810, lysine 817–alanine 840, serine 845–glutamate 868, aspartate 874–glutamate 897, alanine 902–asparagine 928, and leucine 933–lysine 957.

It belongs to the NLRP family. Directly interacts with CASP1 and IL1B. In terms of tissue distribution, expressed in numerous tissues including uterus and ovary, with low levels in heart and brain. Not detected in skeletal muscle.

In terms of biological role, inhibits CASP1/caspase-1-dependent IL1B secretion. In Homo sapiens (Human), this protein is NACHT, LRR and PYD domains-containing protein 7 (NLRP7).